Consider the following 176-residue polypeptide: NAD(P)H-quinone oxidoreductase subunit I, chloroplastic (176 aa).

2 4Fe-4S ferredoxin-type domains span residues 55–84 (GRIH…VDWE) and 95–124 (LNYS…MTEE). The [4Fe-4S] cluster site is built by cysteine 64, cysteine 67, cysteine 70, cysteine 74, cysteine 104, cysteine 107, cysteine 110, and cysteine 114.

The protein belongs to the complex I 23 kDa subunit family. NDH is composed of at least 16 different subunits, 5 of which are encoded in the nucleus. [4Fe-4S] cluster serves as cofactor.

It localises to the plastid. The protein resides in the chloroplast thylakoid membrane. It catalyses the reaction a plastoquinone + NADH + (n+1) H(+)(in) = a plastoquinol + NAD(+) + n H(+)(out). The catalysed reaction is a plastoquinone + NADPH + (n+1) H(+)(in) = a plastoquinol + NADP(+) + n H(+)(out). Its function is as follows. NDH shuttles electrons from NAD(P)H:plastoquinone, via FMN and iron-sulfur (Fe-S) centers, to quinones in the photosynthetic chain and possibly in a chloroplast respiratory chain. The immediate electron acceptor for the enzyme in this species is believed to be plastoquinone. Couples the redox reaction to proton translocation, and thus conserves the redox energy in a proton gradient. In Populus alba (White poplar), this protein is NAD(P)H-quinone oxidoreductase subunit I, chloroplastic.